A 70-amino-acid polypeptide reads, in one-letter code: DNA-directed RNA polymerase subunit epsilon (70 aa).

This sequence belongs to the RNA polymerase subunit epsilon family. As to quaternary structure, RNAP is composed of a core of 2 alpha, a beta and a beta' subunit. The core is associated with a delta subunit, and at least one of epsilon or omega. When a sigma factor is associated with the core the holoenzyme is formed, which can initiate transcription.

The enzyme catalyses RNA(n) + a ribonucleoside 5'-triphosphate = RNA(n+1) + diphosphate. In terms of biological role, a non-essential component of RNA polymerase (RNAP). In Bacillus cytotoxicus (strain DSM 22905 / CIP 110041 / 391-98 / NVH 391-98), this protein is DNA-directed RNA polymerase subunit epsilon.